We begin with the raw amino-acid sequence, 225 residues long: Holliday junction branch migration complex subunit RuvA (225 aa).

The interval M1–P68 is domain I. The segment at E69–S147 is domain II. A flexible linker region spans residues L148 to Q158. The tract at residues L159 to A225 is domain III.

It belongs to the RuvA family. Homotetramer. Forms an RuvA(8)-RuvB(12)-Holliday junction (HJ) complex. HJ DNA is sandwiched between 2 RuvA tetramers; dsDNA enters through RuvA and exits via RuvB. An RuvB hexamer assembles on each DNA strand where it exits the tetramer. Each RuvB hexamer is contacted by two RuvA subunits (via domain III) on 2 adjacent RuvB subunits; this complex drives branch migration. In the full resolvosome a probable DNA-RuvA(4)-RuvB(12)-RuvC(2) complex forms which resolves the HJ.

The protein resides in the cytoplasm. In terms of biological role, the RuvA-RuvB-RuvC complex processes Holliday junction (HJ) DNA during genetic recombination and DNA repair, while the RuvA-RuvB complex plays an important role in the rescue of blocked DNA replication forks via replication fork reversal (RFR). RuvA specifically binds to HJ cruciform DNA, conferring on it an open structure. The RuvB hexamer acts as an ATP-dependent pump, pulling dsDNA into and through the RuvAB complex. HJ branch migration allows RuvC to scan DNA until it finds its consensus sequence, where it cleaves and resolves the cruciform DNA. The protein is Holliday junction branch migration complex subunit RuvA of Prochlorococcus marinus (strain MIT 9313).